Reading from the N-terminus, the 321-residue chain is Anthranilate phosphoribosyltransferase (321 aa).

5-phospho-alpha-D-ribose 1-diphosphate-binding positions include Gly72, 75–76 (GD), Thr80, 82–85 (NVST), 99–107 (KHGNVSITS), and Ser111. Residue Gly72 participates in anthranilate binding. Ser84 serves as a coordination point for Mg(2+). Asn102 contacts anthranilate. Arg157 lines the anthranilate pocket. Residues Asp216 and Glu217 each contribute to the Mg(2+) site.

It belongs to the anthranilate phosphoribosyltransferase family. In terms of assembly, homodimer. Mg(2+) is required as a cofactor.

The catalysed reaction is N-(5-phospho-beta-D-ribosyl)anthranilate + diphosphate = 5-phospho-alpha-D-ribose 1-diphosphate + anthranilate. It participates in amino-acid biosynthesis; L-tryptophan biosynthesis; L-tryptophan from chorismate: step 2/5. Functionally, catalyzes the transfer of the phosphoribosyl group of 5-phosphorylribose-1-pyrophosphate (PRPP) to anthranilate to yield N-(5'-phosphoribosyl)-anthranilate (PRA). The polypeptide is Anthranilate phosphoribosyltransferase (Methanococcus maripaludis (strain C7 / ATCC BAA-1331)).